Reading from the N-terminus, the 711-residue chain is Putative DNA topoisomerase 3 (711 aa).

In terms of domain architecture, Toprim spans 2-135; sequence KYLILAEKPS…LRRLWISSVT (134 aa). Residues E8 and D104 each coordinate Mg(2+). Residues 152–580 form the Topo IA-type catalytic domain; that stretch reads YNDLYYAALA…EMKGFTKDVV (429 aa). Residues 186–191 form an interaction with DNA region; sequence SLGRVQ. Y305 acts as the O-(5'-phospho-DNA)-tyrosine intermediate in catalysis. Residues 691 to 711 are disordered; the sequence is MNKNEGLDNNPFKDALKNLNL.

Belongs to the type IA topoisomerase family. Mg(2+) is required as a cofactor.

The enzyme catalyses ATP-independent breakage of single-stranded DNA, followed by passage and rejoining.. In terms of biological role, releases the supercoiling and torsional tension of DNA, which is introduced during the DNA replication and transcription, by transiently cleaving and rejoining one strand of the DNA duplex. Introduces a single-strand break via transesterification at a target site in duplex DNA. The scissile phosphodiester is attacked by the catalytic tyrosine of the enzyme, resulting in the formation of a DNA-(5'-phosphotyrosyl)-enzyme intermediate and the expulsion of a 3'-OH DNA strand. The free DNA strand then undergoes passage around the unbroken strand, thus removing DNA supercoils. Finally, in the religation step, the DNA 3'-OH attacks the covalent intermediate to expel the active-site tyrosine and restore the DNA phosphodiester backbone. The sequence is that of Putative DNA topoisomerase 3 from Staphylococcus aureus (strain bovine RF122 / ET3-1).